Reading from the N-terminus, the 253-residue chain is uncharacterized protein (253 aa).

10–35 (ISGAASKRGIGRATAELFASHGARVA) lines the NADP(+) pocket. Residue serine 144 participates in substrate binding. The Proton acceptor role is filled by tyrosine 159.

The protein belongs to the short-chain dehydrogenases/reductases (SDR) family.

This is an uncharacterized protein from Sinorhizobium fredii (strain NBRC 101917 / NGR234).